The following is a 329-amino-acid chain: GTPase Obg (329 aa).

The Obg domain occupies 1–159 (MQFIDQARIT…WPLQLELKLL (159 aa)). Positions 160 to 328 (AEVGIIGLPN…LLAETWVELG (169 aa)) constitute an OBG-type G domain. Residues 166-173 (GLPNAGKS), 191-195 (FTTLV), 213-216 (DIPG), 280-283 (NKQE), and 309-311 (SAA) each bind ATP. Positions 173 and 193 each coordinate Mg(2+).

The protein belongs to the TRAFAC class OBG-HflX-like GTPase superfamily. OBG GTPase family. As to quaternary structure, monomer. The cofactor is Mg(2+).

The protein resides in the cytoplasm. An essential GTPase which binds GTP, GDP and possibly (p)ppGpp with moderate affinity, with high nucleotide exchange rates and a fairly low GTP hydrolysis rate. Plays a role in control of the cell cycle, stress response, ribosome biogenesis and in those bacteria that undergo differentiation, in morphogenesis control. The protein is GTPase Obg of Synechococcus sp. (strain CC9605).